Reading from the N-terminus, the 1531-residue chain is Multidrug resistance-associated protein 1 (1531 aa).

At 1–33 (MALRGFCSADGSDPLWDWNVTWYTSNPDFTKCF) the chain is on the extracellular side. N-linked (GlcNAc...) asparagine glycosylation occurs at N19. Residues 34-54 (QNTVLVWVPCFYLWACFPFYF) traverse the membrane as a helical segment. The Cytoplasmic portion of the chain corresponds to 55–74 (LYLSRHDRGYIQMTLLNKTK). A helical membrane pass occupies residues 75 to 95 (TALGFLLWIVCWADLFYSFWE). Over 96–100 (RSRGI) the chain is Extracellular. The chain crosses the membrane as a helical span at residues 101–121 (FLAPVFLVSPTLLGITMLLAT). The Cytoplasmic portion of the chain corresponds to 122–133 (FLIQLERRKGVQ). Residues 134–154 (SSGIMLTFWLVALLCALAILR) form a helical membrane-spanning segment. Residues 155-172 (SKIMTALKEDVQVDLFRD) lie on the Extracellular side of the membrane. Residues 173 to 193 (MTFYVYFSLVLIQLVLSCFSD) traverse the membrane as a helical segment. Over 194-316 (RSPLFSETIH…KEWNPSLFKV (123 aa)) the chain is Cytoplasmic. Y277 is subject to Phosphotyrosine. S289 carries the post-translational modification Phosphoserine. Residues 317–337 (LYKTFGPYFLMSFFFKAIHDL) form a helical membrane-spanning segment. In terms of domain architecture, ABC transmembrane type-1 1 spans 325 to 608 (FLMSFFFKAI…LPMVISSIVQ (284 aa)). At 338-363 (MMFSGPEILKLLINFVNDTKAPDWQG) the chain is on the extracellular side. Residues 364-384 (YFYTALLFVAACLQTLVLHQY) traverse the membrane as a helical segment. Topologically, residues 385–440 (FHICFVSGMRIKTAVIGAVYRKALVITNAARKSSTVGEIVNLMSVDAQRFMDLATY) are cytoplasmic. The helical transmembrane segment at 441–461 (INMIWSAPLQVILALYLLWRN) threads the bilayer. The Extracellular portion of the chain corresponds to 462–464 (LGP). Residues 465–485 (PILAGVAVMVLMVPVNAVMAM) form a helical membrane-spanning segment. Residues 486 to 547 (KTKTYQVAHM…VLKKSAYLAA (62 aa)) lie on the Cytoplasmic side of the membrane. K503 bears the N6-succinyllysine mark. Residues 548–568 (VGTFTWVCTPFLVALCTFAVY) form a helical membrane-spanning segment. The Extracellular portion of the chain corresponds to 569–590 (VTIDKNNVLDAQKAFVSLALFN). A helical membrane pass occupies residues 591 to 611 (ILRFPLNILPMVISSIVQASV). Topologically, residues 612–967 (SLKRLRIFLS…VKLSVYWDYM (356 aa)) are cytoplasmic. An ABC transporter 1 domain is found at 644-868 (ITVRNATFTW…DGAFAEFLRT (225 aa)). 678 to 685 (GQVGCGKS) is an ATP binding site. The segment at 871-893 (SAEQEQDPEDNGVTGVSGPGKEA) is disordered. Residues S905, S915, and S930 each carry the phosphoserine modification. The interval 917–938 (SSSYSGDVSRQHNSTAELQKDG) is disordered. Residues 922–933 (GDVSRQHNSTAE) are compositionally biased toward polar residues. The chain crosses the membrane as a helical span at residues 968–988 (KAIGLFISFLSIFLFICNHVA). Residues 975 to 1256 (SFLSIFLFIC…LVRMSSEMET (282 aa)) form the ABC transmembrane type-1 2 domain. The Extracellular segment spans residues 989–1025 (ALASNYWLSLWTDDPIVNGTQEHTKVRLSVYGALGIS). N-linked (GlcNAc...) asparagine glycosylation is present at N1006. Residues 1026 to 1046 (QGIAVFGYSMAVSIGGILASR) form a helical membrane-spanning segment. The Cytoplasmic segment spans residues 1047–1089 (CLHVDLLHSILRSPMSFFERTPSGNLVNRFSKELDTVDSMIPE). Residues 1090–1110 (VIKMFMGSLFNVIGACIVILL) traverse the membrane as a helical segment. A1111 is a topological domain (extracellular). Residues 1112 to 1132 (TPIAAIIIPPLGLIYFFVQRF) traverse the membrane as a helical segment. Residues 1133 to 1203 (YVASSRQLKR…VANRWLAVRL (71 aa)) lie on the Cytoplasmic side of the membrane. A helical membrane pass occupies residues 1204–1224 (ECVGNCIVLFAALFAVISRHS). The Extracellular portion of the chain corresponds to 1225–1226 (LS). The helical transmembrane segment at 1227-1247 (AGLVGLSVSYSLQVTTYLNWL) threads the bilayer. Over 1248–1531 (VRMSSEMETN…YNMARDAGLV (284 aa)) the chain is Cytoplasmic. The ABC transporter 2 domain occupies 1293-1527 (VEFRNYCLRY…RGLFYNMARD (235 aa)). 1327 to 1334 (GRTGAGKS) is a binding site for ATP.

This sequence belongs to the ABC transporter superfamily. ABCC family. Conjugate transporter (TC 3.A.1.208) subfamily.

It localises to the cell membrane. It is found in the basolateral cell membrane. The catalysed reaction is ATP + H2O + xenobioticSide 1 = ADP + phosphate + xenobioticSide 2.. The enzyme catalyses an S-substituted glutathione(in) + ATP + H2O = an S-substituted glutathione(out) + ADP + phosphate + H(+). It catalyses the reaction sphing-4-enine 1-phosphate(in) + ATP + H2O = sphing-4-enine 1-phosphate(out) + ADP + phosphate + H(+). It carries out the reaction leukotriene C4(in) + ATP + H2O = leukotriene C4(out) + ADP + phosphate + H(+). The catalysed reaction is 17beta-estradiol 17-O-(beta-D-glucuronate)(in) + ATP + H2O = 17beta-estradiol 17-O-(beta-D-glucuronate)(out) + ADP + phosphate + H(+). The enzyme catalyses daunorubicin(in) + ATP + H2O = daunorubicin(out) + ADP + phosphate + H(+). It catalyses the reaction vincristine(in) + ATP + H2O = vincristine(out) + ADP + phosphate + H(+). It carries out the reaction 2',3'-cGAMP(in) + ATP + H2O = 2',3'-cGAMP(out) + ADP + phosphate + H(+). The catalysed reaction is S-[(2E,6E,10E)-geranylgeranyl]-L-glutathione(in) + ATP + H2O = S-[(2E,6E,10E)-geranylgeranyl]-L-glutathione(out) + ADP + phosphate + H(+). The enzyme catalyses prostaglandin A2-S-(R)-glutathione(in) + ATP + H2O = prostaglandin A2-S-(R)-glutathione(out) + ADP + phosphate + H(+). It catalyses the reaction prostaglandin A2-S-(S)-glutathione(in) + ATP + H2O = prostaglandin A2-S-(S)-glutathione(out) + ADP + phosphate + H(+). Its activity is regulated as follows. MK 571 inhibits sphingosine 1-phosphate and leukotriene C4 export. In terms of biological role, mediates export of organic anions and drugs from the cytoplasm. Mediates ATP-dependent transport of glutathione and glutathione conjugates, leukotriene C4, estradiol-17-beta-o-glucuronide, methotrexate, antiviral drugs and other xenobiotics. Confers resistance to anticancer drugs by decreasing accumulation of drug in cells, and by mediating ATP- and GSH-dependent drug export. Hydrolyzes ATP with low efficiency. Catalyzes the export of sphingosine 1-phosphate from mast cells independently of their degranulation. Participates in inflammatory response by allowing export of leukotriene C4 from leukotriene C4-synthesizing cells. Mediates ATP-dependent, GSH-independent cyclic GMP-AMP (cGAMP) export. Thus, by limiting intracellular cGAMP concentrations negatively regulates the cGAS-STING pathway. Exports S-geranylgeranyl-glutathione (GGG) in lymphoid cells and stromal compartments of lymphoid organs. ABCC1 (via extracellular transport) with GGT5 (via GGG catabolism) establish GGG gradients within lymphoid tissues to position P2RY8-positive lymphocytes at germinal centers in lymphoid follicles and restrict their chemotactic transmigration from blood vessels to the bone marrow parenchyma. Mediates basolateral export of GSH-conjugated R- and S-prostaglandin A2 diastereomers in polarized epithelial cells. The protein is Multidrug resistance-associated protein 1 of Macaca fascicularis (Crab-eating macaque).